Here is a 67-residue protein sequence, read N- to C-terminus: Envelope small membrane protein (67 aa).

Glycine 2 is lipidated: N-myristoyl glycine; by host. Residues glycine 2–isoleucine 15 form an endoplasmic reticulum retention signal region. Topologically, residues glycine 2–alanine 27 are virion surface. The chain crosses the membrane as a helical span at residues leucine 28–valine 48. At alanine 49–valine 67 the chain is on the intravirion side.

Belongs to the arteriviridae E protein family. In terms of assembly, homomultimer. Associates with itself into higher-order structures, including dimers, trimers and tetramers. Associates with the GP2b-GP3-GP4 complex. Post-translationally, myristoylated. Not glycosylated.

The protein resides in the virion membrane. Its subcellular location is the host endoplasmic reticulum membrane. It is found in the host Golgi apparatus membrane. The protein localises to the secreted. Minor envelope protein. May function as a viroporin in the virion envelope that facilitates uncoating of the virus in order to release the genomic RNA into the cytoplasm for subsequent replication. This is Envelope small membrane protein (GP2a) from Equidae (horses).